Consider the following 363-residue polypeptide: Cyanuric acid amidohydrolase (363 aa).

The segment at 1–103 (MKTRVTRLTV…LVFEVDDSAP (103 aa)) is RU A. Residues R51 and 82–83 (SG) contribute to the substrate site. The segment at 111–247 (GLAAGVAFTR…NEVLVLGNAP (137 aa)) is RU B. K161 is an active-site residue. Residues R193 and 230–231 (SA) contribute to the substrate site. The active-site Nucleophile is the S230. The interval 253–363 (YRIGHAVMED…GGPLALIVRS (111 aa)) is RU C. Residue E297 participates in Mg(2+) binding. Residues R324 and 343-344 (SG) each bind substrate. A346, Q349, G350, P351, and G354 together coordinate Mg(2+).

Belongs to the cyclic amide hydrolase (CyAH) family. As to quaternary structure, homotetramer.

The enzyme catalyses cyanurate + H2O = 1-carboxybiuret + H(+). It participates in xenobiotic degradation; atrazine degradation; biuret from cyanurate: step 1/1. Inhibited by barbituric acid. In terms of biological role, responsible for the hydrolysis of cyanuric acid, an intermediate formed during catabolism of s-triazine based compounds in herbicides such as atrazine and polymers such as melamine. Catalyzes the hydrolytic opening of the s-triazine ring of cyanuric acid (2,4,6-trihydroxy-s-triazine) to yield carbon dioxide and carboxybiuret, which spontaneously decarboxylates to biuret. This is Cyanuric acid amidohydrolase from Ectopseudomonas oleovorans (strain CECT 5344) (Pseudomonas pseudoalcaligenes).